Reading from the N-terminus, the 333-residue chain is 5-formaminoimidazole-4-carboxamide-1-(beta)-D-ribofuranosyl 5'-monophosphate synthetase (333 aa).

5-amino-1-(5-phospho-beta-D-ribosyl)imidazole-4-carboxamide contacts are provided by H20 and S85. The ATP-grasp domain occupies 106–313 (RELIKWEADQ…YFDRPMDMGE (208 aa)). Residues 136–187 (PEEV…VPAY) and E209 each bind ATP. Residue N229 coordinates 5-amino-1-(5-phospho-beta-D-ribosyl)imidazole-4-carboxamide. Mg(2+)-binding residues include E268 and E281.

The protein belongs to the phosphohexose mutase family. Requires Mg(2+) as cofactor. It depends on Mn(2+) as a cofactor.

It catalyses the reaction 5-amino-1-(5-phospho-beta-D-ribosyl)imidazole-4-carboxamide + formate + ATP = 5-formamido-1-(5-phospho-D-ribosyl)imidazole-4-carboxamide + ADP + phosphate. Its pathway is purine metabolism; IMP biosynthesis via de novo pathway; 5-formamido-1-(5-phospho-D-ribosyl)imidazole-4-carboxamide from 5-amino-1-(5-phospho-D-ribosyl)imidazole-4-carboxamide (formate route): step 1/1. Its function is as follows. Catalyzes the ATP- and formate-dependent formylation of 5-aminoimidazole-4-carboxamide-1-beta-d-ribofuranosyl 5'-monophosphate (AICAR) to 5-formaminoimidazole-4-carboxamide-1-beta-d-ribofuranosyl 5'-monophosphate (FAICAR) in the absence of folates. This is 5-formaminoimidazole-4-carboxamide-1-(beta)-D-ribofuranosyl 5'-monophosphate synthetase from Pyrobaculum islandicum (strain DSM 4184 / JCM 9189 / GEO3).